A 127-amino-acid chain; its full sequence is MAEGKKYQINISVNTAYLAEQSDPSADRYVFAYTITIENVGTVAAQLISRHWVITDADDVVQEVKGLGVVGEQPLLRPGETFEYSSGAALATPVGTMQGSYQMVAEDGNKFDAEIPRFTLAMPRVLH.

One can recognise an ApaG domain in the interval 3–127 (EGKKYQINIS…FTLAMPRVLH (125 aa)).

The protein is Protein ApaG of Thiobacillus denitrificans (strain ATCC 25259 / T1).